A 522-amino-acid chain; its full sequence is Penicillin-sensitive carboxypeptidase A (522 aa).

The active-site Acyl-ester intermediate is the S94. K97 serves as the catalytic Proton acceptor. The active site involves S351. K461 contacts substrate.

The protein belongs to the peptidase S13 family.

It carries out the reaction Preferential cleavage: (Ac)2-L-Lys-D-Ala-|-D-Ala. Also transpeptidation of peptidyl-alanyl moieties that are N-acyl substituents of D-alanine.. Inhibited by penicillin G. Functionally, carboxypeptidase. This is Penicillin-sensitive carboxypeptidase A (pscA) from Dictyostelium discoideum (Social amoeba).